Consider the following 409-residue polypeptide: Carbamoyl phosphate synthase arginine-specific small chain (409 aa).

The Glutamine amidotransferase type-1 domain occupies 197–389 (NVALIDCGVK…FDNMSQYRAL (193 aa)). Catalysis depends on Cys-277, which acts as the Nucleophile. Catalysis depends on residues His-362 and Glu-364.

It belongs to the CarA family. In terms of assembly, heterodimer composed of 2 chains; the small (or glutamine) chain promotes the hydrolysis of glutamine to ammonia, which is used by the large (or ammonia) chain to synthesize carbamoyl phosphate.

Its subcellular location is the cytoplasm. It catalyses the reaction hydrogencarbonate + L-glutamine + 2 ATP + H2O = carbamoyl phosphate + L-glutamate + 2 ADP + phosphate + 2 H(+). The catalysed reaction is L-glutamine + H2O = L-glutamate + NH4(+). The protein operates within amino-acid biosynthesis; L-arginine biosynthesis; carbamoyl phosphate from bicarbonate: step 1/1. Small subunit of the arginine-specific carbamoyl phosphate synthase (CPSase). CPSase catalyzes the formation of carbamoyl phosphate from the ammonia moiety of glutamine, carbonate, and phosphate donated by ATP, constituting the first step of 2 biosynthetic pathways, one leading to arginine and/or urea and the other to pyrimidine nucleotides. The small subunit (glutamine amidotransferase) binds and cleaves glutamine to supply the large subunit with the substrate ammonia. The sequence is that of Carbamoyl phosphate synthase arginine-specific small chain (CPA1) from Kluyveromyces lactis (strain ATCC 8585 / CBS 2359 / DSM 70799 / NBRC 1267 / NRRL Y-1140 / WM37) (Yeast).